Here is a 139-residue protein sequence, read N- to C-terminus: Maintenance of telomere capping protein 7 (139 aa).

The next 2 membrane-spanning stretches (helical) occupy residues 13–33 (SHHV…FVLL) and 42–62 (FYFL…FVFI). Residues 94 to 121 (RSVANPALPPQKKKKKKKKGTLRTGEVE) are disordered. Over residues 104 to 114 (QKKKKKKKKGT) the composition is skewed to basic residues.

The protein localises to the membrane. Its function is as follows. May be involved in telomere capping. This is Maintenance of telomere capping protein 7 (MTC7) from Saccharomyces cerevisiae (strain ATCC 204508 / S288c) (Baker's yeast).